The chain runs to 427 residues: Mitochondrial distribution and morphology protein 10 (427 aa).

Positions 393–414 (SSYANSQATAGAQGSSGGPPTS) are enriched in low complexity. Positions 393–427 (SSYANSQATAGAQGSSGGPPTSYWRGVGVSVSYSS) are disordered.

Belongs to the MDM10 family. Component of the ER-mitochondria encounter structure (ERMES) or MDM complex, composed of mmm1, mdm10, mdm12 and mdm34. Associates with the mitochondrial outer membrane sorting assembly machinery SAM(core) complex.

It localises to the mitochondrion outer membrane. Its function is as follows. Component of the ERMES/MDM complex, which serves as a molecular tether to connect the endoplasmic reticulum and mitochondria. Components of this complex are involved in the control of mitochondrial shape and protein biogenesis and may function in phospholipid exchange. mdm10 is involved in the late assembly steps of the general translocase of the mitochondrial outer membrane (TOM complex). Functions in the tom40-specific route of the assembly of outer membrane beta-barrel proteins, including the association of tom40 with the receptor tom22 and small TOM proteins. Can associate with the SAM(core) complex as well as the mdm12-mmm1 complex, both involved in late steps of the major beta-barrel assembly pathway, that is responsible for biogenesis of all outer membrane beta-barrel proteins. May act as a switch that shuttles between both complexes and channels precursor proteins into the tom40-specific pathway. Plays a role in mitochondrial morphology and in the inheritance of mitochondria. The chain is Mitochondrial distribution and morphology protein 10 (mdmB) from Emericella nidulans (strain FGSC A4 / ATCC 38163 / CBS 112.46 / NRRL 194 / M139) (Aspergillus nidulans).